Consider the following 766-residue polypeptide: Cytoplasmic polyadenylation element-binding protein 3 (766 aa).

3 disordered regions span residues methionine 1–threonine 35, valine 131–leucine 179, and proline 216–arginine 299. Polar residues-rich tracts occupy residues glutamate 233–glutamine 256 and serine 276–asparagine 289. Positions isoleucine 310 to glycine 332 constitute an RRM domain. The disordered stretch occupies residues lysine 578–serine 602. Residues leucine 589–serine 602 show a composition bias toward low complexity.

Functionally, cytoplasmic polyadenylation element binding protein that binds to and regulates the translation of specific mRNAs. This is Cytoplasmic polyadenylation element-binding protein 3 (cpb-3) from Caenorhabditis remanei (Caenorhabditis vulgaris).